A 184-amino-acid polypeptide reads, in one-letter code: Large ribosomal subunit protein uL6 (184 aa).

It belongs to the universal ribosomal protein uL6 family. In terms of assembly, part of the 50S ribosomal subunit.

Functionally, this protein binds to the 23S rRNA, and is important in its secondary structure. It is located near the subunit interface in the base of the L7/L12 stalk, and near the tRNA binding site of the peptidyltransferase center. This chain is Large ribosomal subunit protein uL6, found in Fervidobacterium nodosum (strain ATCC 35602 / DSM 5306 / Rt17-B1).